The chain runs to 202 residues: Small ribosomal subunit protein uS4c (202 aa).

The region spanning 90–154 (MRLDNIIFRL…SQSIIIKNLN (65 aa)) is the S4 RNA-binding domain.

The protein belongs to the universal ribosomal protein uS4 family. Part of the 30S ribosomal subunit. Contacts protein S5. The interaction surface between S4 and S5 is involved in control of translational fidelity.

It localises to the plastid. It is found in the chloroplast. One of the primary rRNA binding proteins, it binds directly to 16S rRNA where it nucleates assembly of the body of the 30S subunit. Functionally, with S5 and S12 plays an important role in translational accuracy. The chain is Small ribosomal subunit protein uS4c (rps4) from Marchantia polymorpha (Common liverwort).